A 186-amino-acid chain; its full sequence is Peptide deformylase (186 aa).

The Fe cation site is built by cysteine 113 and histidine 156. Glutamate 157 is a catalytic residue. Histidine 160 serves as a coordination point for Fe cation.

Belongs to the polypeptide deformylase family. Requires Fe(2+) as cofactor.

The catalysed reaction is N-terminal N-formyl-L-methionyl-[peptide] + H2O = N-terminal L-methionyl-[peptide] + formate. In terms of biological role, removes the formyl group from the N-terminal Met of newly synthesized proteins. Requires at least a dipeptide for an efficient rate of reaction. N-terminal L-methionine is a prerequisite for activity but the enzyme has broad specificity at other positions. The chain is Peptide deformylase from Lactiplantibacillus plantarum (strain ATCC BAA-793 / NCIMB 8826 / WCFS1) (Lactobacillus plantarum).